A 210-amino-acid polypeptide reads, in one-letter code: Small ribosomal subunit protein uS4 (210 aa).

The S4 RNA-binding domain occupies 100–160 (GRLDNVVYRM…EKSKNQLRVK (61 aa)).

Belongs to the universal ribosomal protein uS4 family. Part of the 30S ribosomal subunit. Contacts protein S5. The interaction surface between S4 and S5 is involved in control of translational fidelity.

One of the primary rRNA binding proteins, it binds directly to 16S rRNA where it nucleates assembly of the body of the 30S subunit. Functionally, with S5 and S12 plays an important role in translational accuracy. The protein is Small ribosomal subunit protein uS4 of Alcanivorax borkumensis (strain ATCC 700651 / DSM 11573 / NCIMB 13689 / SK2).